A 274-amino-acid polypeptide reads, in one-letter code: Nitrogenase iron protein (274 aa).

8–15 (GKGGIGKS) is an ATP binding site. [4Fe-4S] cluster is bound at residue Cys-94. The residue at position 97 (Arg-97) is an ADP-ribosylarginine; by dinitrogenase reductase ADP-ribosyltransferase. Residue Cys-129 participates in [4Fe-4S] cluster binding.

The protein belongs to the NifH/BchL/ChlL family. As to quaternary structure, homodimer. The cofactor is [4Fe-4S] cluster. Post-translationally, the reversible ADP-ribosylation of Arg-97 inactivates the nitrogenase reductase and regulates nitrogenase activity.

The catalysed reaction is N2 + 8 reduced [2Fe-2S]-[ferredoxin] + 16 ATP + 16 H2O = H2 + 8 oxidized [2Fe-2S]-[ferredoxin] + 2 NH4(+) + 16 ADP + 16 phosphate + 6 H(+). In terms of biological role, the key enzymatic reactions in nitrogen fixation are catalyzed by the nitrogenase complex, which has 2 components: the iron protein and the molybdenum-iron protein. This Methanocella arvoryzae (strain DSM 22066 / NBRC 105507 / MRE50) protein is Nitrogenase iron protein.